The following is a 289-amino-acid chain: Four and a half LIM domains protein 3 (289 aa).

Ser2 carries the post-translational modification N-acetylserine. Residues 7-31 (CAKCNESLYGRKYIQTDSGPYCVPC) form a C4-type zinc finger. 2 consecutive LIM zinc-binding domains span residues 40–92 (CAEC…CNEC) and 101–153 (CSAC…CVPC). Residue Lys157 is modified to N6-acetyllysine. 2 consecutive LIM zinc-binding domains span residues 162–212 (CARC…CVAC) and 221–275 (CSSC…FVPD). At Lys244 the chain carries N6-acetyllysine.

In terms of assembly, interacts with SOX15; the interaction recruits FHL3 to FOXK1 promoters where it acts as a transcriptional coactivator of FOXK1. In terms of tissue distribution, expressed in myogenic progenitor cells (at protein level). Expressed in skeletal striated muscle and the heart. Expressed to a lesser extent, in lung, and kidney. Expressed in skin and skeletal muscles such as the masseter, tongue, tibialis anterior and plantar muscles.

Its subcellular location is the nucleus. The protein resides in the cytoplasm. Recruited by SOX15 to FOXK1 promoters where it acts as a transcriptional coactivator of FOXK1. The chain is Four and a half LIM domains protein 3 (Fhl3) from Mus musculus (Mouse).